The primary structure comprises 443 residues: 23S rRNA (uracil(1939)-C(5))-methyltransferase RlmD (443 aa).

The TRAM domain maps to 8-66 (KPLPAEPIAAHIESFAHDGKGIAHVDGRVVFVDGALPGEDVTFVYTEIKRDYAAGRVVE). Positions 79, 85, 88, and 167 each coordinate [4Fe-4S] cluster. 6 residues coordinate S-adenosyl-L-methionine: glutamine 276, phenylalanine 305, asparagine 310, glutamate 326, aspartate 353, and aspartate 374. Cysteine 400 serves as the catalytic Nucleophile.

The protein belongs to the class I-like SAM-binding methyltransferase superfamily. RNA M5U methyltransferase family. RlmD subfamily.

The enzyme catalyses uridine(1939) in 23S rRNA + S-adenosyl-L-methionine = 5-methyluridine(1939) in 23S rRNA + S-adenosyl-L-homocysteine + H(+). Functionally, catalyzes the formation of 5-methyl-uridine at position 1939 (m5U1939) in 23S rRNA. This chain is 23S rRNA (uracil(1939)-C(5))-methyltransferase RlmD, found in Methylococcus capsulatus (strain ATCC 33009 / NCIMB 11132 / Bath).